We begin with the raw amino-acid sequence, 330 residues long: Putative pentatricopeptide repeat-containing protein At5g36300 (330 aa).

PPR repeat units follow at residues 10-44 (SLSMYNSWIRYFCRTGETNEAMSLLAEIHSLGSRP), 45-75 (DPLSYVSFIETLASLRRTLEADALFHEVVRF), 83-113 (VRLYNALVSRYLRKEVSWRVVNEMKKRKFRL), 114-148 (NSFVYGKIIRIYRDNGMWKKALGIVEEIREIGLPM), 149-179 (DVEIYNSVIDTFGKYGELDEELQVLEKLQRS), 185-215 (NIRTWNSLIRWHCHHGAVDMALELFTMIFED), 231-265 (SANLFCTLANAYAQQGLCKQTVKVLKMMENEGIEP), 266-296 (NLIMLNVLINAFGTAGKHMEALSIYHHIKET), and 302-330 (DVVTYSTLMKAFTRAKKYEMVCSFYLVTL).

Belongs to the PPR family. P subfamily.

In Arabidopsis thaliana (Mouse-ear cress), this protein is Putative pentatricopeptide repeat-containing protein At5g36300.